A 206-amino-acid chain; its full sequence is Probable glutathione peroxidase 3, mitochondrial (206 aa).

Residues 1 to 12 (MPRSSRWVNQRA) constitute a mitochondrion transit peptide. The active site involves Cys80.

The protein belongs to the glutathione peroxidase family. As to quaternary structure, interacts with ABI1 and ABI2. Ubiquitous.

The protein resides in the mitochondrion. The enzyme catalyses 2 glutathione + H2O2 = glutathione disulfide + 2 H2O. The redox states are modulated by H(2)O(2). In terms of biological role, may constitute a glutathione peroxidase-like protective system against oxidative stresses. Involved positively in abscisic acid (ABA) signaling pathway that regulates numerous ABA responses, such as stomatal closure, seed germination and inhibition of vegetative growth. Oxidizes and represses target proteins (e.g. the phosphatase activity of ABI1 and ABI2) when oxidized by H(2)O(2), probably after ABA signaling. Modulates the calcium channel activity in guard cells in response to ABA or H(2)O(2). Confers tolerance to drought stress, by enhancing the ABA-dependent stomatal closure. This chain is Probable glutathione peroxidase 3, mitochondrial (GPX3), found in Arabidopsis thaliana (Mouse-ear cress).